The following is a 311-amino-acid chain: Methionyl-tRNA formyltransferase (311 aa).

110-113 (SLLP) is a (6S)-5,6,7,8-tetrahydrofolate binding site.

Belongs to the Fmt family.

The catalysed reaction is L-methionyl-tRNA(fMet) + (6R)-10-formyltetrahydrofolate = N-formyl-L-methionyl-tRNA(fMet) + (6S)-5,6,7,8-tetrahydrofolate + H(+). Its function is as follows. Attaches a formyl group to the free amino group of methionyl-tRNA(fMet). The formyl group appears to play a dual role in the initiator identity of N-formylmethionyl-tRNA by promoting its recognition by IF2 and preventing the misappropriation of this tRNA by the elongation apparatus. This Streptococcus pneumoniae (strain P1031) protein is Methionyl-tRNA formyltransferase.